Reading from the N-terminus, the 147-residue chain is Chorion class B protein B.L1 (147 aa).

Residues 1 to 38 form a left arm region; it reads IGCGRGCGGRGYGGLGYGGLGYGGLGYGGLGGGCGRGF. Tandem repeats lie at residues 11 to 15, 16 to 20, 21 to 25, and 26 to 30. A 4 X 5 AA tandem repeats of G-Y-G-G-L region spans residues 11-30; the sequence is GYGGLGYGGLGYGGLGYGGL. Residues 39 to 107 are central domain; sequence SGGGLPVATA…GNGAVGITRE (69 aa). The segment at 108-147 is right arm (Gly-rich tandem repeats); sequence GGLGYGAGYGGGYGLGYGGYGGGYGLGYGGYGGCGCGCGY.

The protein belongs to the chorion protein family.

This protein is one of many from the eggshell of the silk moth. The sequence is that of Chorion class B protein B.L1 from Bombyx mori (Silk moth).